The chain runs to 353 residues: Fe(3+) ions import ATP-binding protein FbpC (353 aa).

One can recognise an ABC transporter domain in the interval 9-239; sequence VVFENVRKTF…PASSFIADFM (231 aa). Residue 41–48 participates in ATP binding; sequence GPSGCGKT.

Belongs to the ABC transporter superfamily. Fe(3+) ion importer (TC 3.A.1.10) family. As to quaternary structure, the complex is composed of two ATP-binding proteins (FbpC), two transmembrane proteins (FbpB) and a solute-binding protein (FbpA).

The protein resides in the cell inner membrane. It carries out the reaction Fe(3+)(out) + ATP + H2O = Fe(3+)(in) + ADP + phosphate + H(+). Functionally, part of the ABC transporter complex FbpABC involved in Fe(3+) ions import. Responsible for energy coupling to the transport system. The polypeptide is Fe(3+) ions import ATP-binding protein FbpC (Agrobacterium fabrum (strain C58 / ATCC 33970) (Agrobacterium tumefaciens (strain C58))).